Consider the following 479-residue polypeptide: Ribosomal RNA small subunit methyltransferase F (479 aa).

Residues 125–131 (AAAPGSK), E149, D176, and D194 each bind S-adenosyl-L-methionine. The active-site Nucleophile is the C247.

It belongs to the class I-like SAM-binding methyltransferase superfamily. RsmB/NOP family.

Its subcellular location is the cytoplasm. It carries out the reaction cytidine(1407) in 16S rRNA + S-adenosyl-L-methionine = 5-methylcytidine(1407) in 16S rRNA + S-adenosyl-L-homocysteine + H(+). Its function is as follows. Specifically methylates the cytosine at position 1407 (m5C1407) of 16S rRNA. This chain is Ribosomal RNA small subunit methyltransferase F, found in Escherichia coli (strain ATCC 8739 / DSM 1576 / NBRC 3972 / NCIMB 8545 / WDCM 00012 / Crooks).